We begin with the raw amino-acid sequence, 422 residues long: Glycine amidinotransferase, mitochondrial (422 aa).

Residues 1–37 (MLRVRCVRGGSRGAEAVHYIGSMLRKGFVGWVQRSFQ) constitute a mitochondrion transit peptide. Active-site residues include Asp253 and His302. Residue Cys406 is the Amidino-cysteine intermediate of the active site.

The protein belongs to the amidinotransferase family. As to quaternary structure, homodimer.

It localises to the mitochondrion inner membrane. The enzyme catalyses L-arginine + glycine = guanidinoacetate + L-ornithine. It participates in amine and polyamine biosynthesis; creatine biosynthesis; creatine from L-arginine and glycine: step 1/2. Its function is as follows. Catalyzes the biosynthesis of guanidinoacetate, the immediate precursor of creatine. Creatine plays a vital role in energy metabolism in muscle tissues. May play a role in embryonic and central nervous system development. This chain is Glycine amidinotransferase, mitochondrial, found in Xenopus tropicalis (Western clawed frog).